The primary structure comprises 417 residues: MRVVILGSGVVGVSTAWYLAQEGHDVTVIDRQPEPALETSAGNAGQISPGYAAPWAAPGIPLKAIKWMFQRHAPLAIRPDFTAAQLCWMWQMLLNCDARHYKTNKARMVRLAEYSRDCLQQLRRDTGIQYEGRQGGTLQLFRTEQQYDNATRDIAVLEEAGVPYQLLTRHELASVEPALANVAEKLTGGLRLPHDETGDCQLFTRQLAAMAADAGVTFKLGRHVRQLRVEGQNVTGVQCDDEMIVADAYVMACGSYSTGLLRQWFDIPVYPLKGYSLTIPLADDASAPVSTVLDETYKVAITRFDRRIRVGGMAEVVGFNTDLNPKRRETLEMVVRDLYPHCGPIEQATFWTGLRPMTPDGTPLVGRSPLKNLYLNTGHGTLGWTMACGSGKLLADILSDKSPEIEANDLSVERYVR.

Position 3-17 (3-17 (VVILGSGVVGVSTAW)) interacts with FAD.

The protein belongs to the DadA oxidoreductase family. FAD is required as a cofactor.

It carries out the reaction a D-alpha-amino acid + A + H2O = a 2-oxocarboxylate + AH2 + NH4(+). It functions in the pathway amino-acid degradation; D-alanine degradation; NH(3) and pyruvate from D-alanine: step 1/1. Functionally, oxidative deamination of D-amino acids. This chain is D-amino acid dehydrogenase, found in Pectobacterium carotovorum subsp. carotovorum (strain PC1).